A 304-amino-acid polypeptide reads, in one-letter code: MRYGFDIGGTKIELAVFNDQLEKQYSERVETPKESYEEWLNTIVRLVHKADEMFQCQGTVGLGIPGFVNPATGIAEIVNIRAADHKPIIQDLETRLGREVRAENDANCFALSEAWDEENAQYPSVLGLILGTGFGGGLIFNGKVHSGQTGMAGEVGHTQLNYHALRLLGGDNAPIYDCGCGNRACLDTYLSGRGFEMLYRDMQGEALSAQAIIQRFYAGDQSAVKFVELFIELCAISIGNLITVLDPHVIVLGGGLSNFDYLYEALPKALPARLLRSANVPLIKKAKYGDSGGVRGAAALFLSK.

ATP is bound by residues Gly4–Lys11 and Gly133–Phe140. 4 residues coordinate Zn(2+): His157, Cys178, Cys180, and Cys185.

It belongs to the ROK (NagC/XylR) family. NagK subfamily.

It carries out the reaction N-acetyl-D-glucosamine + ATP = N-acetyl-D-glucosamine 6-phosphate + ADP + H(+). Its pathway is cell wall biogenesis; peptidoglycan recycling. Its function is as follows. Catalyzes the phosphorylation of N-acetyl-D-glucosamine (GlcNAc) derived from cell-wall degradation, yielding GlcNAc-6-P. The polypeptide is N-acetyl-D-glucosamine kinase (Pasteurella multocida (strain Pm70)).